Here is a 303-residue protein sequence, read N- to C-terminus: MTASAPAASASARLLDGRRIAEELLDGLKLRVDARVAAGKARPGLAVVLVGGDPASSVYVRNKRRAAEKVGIEAFDYDLPQGTSEAQLASLIDELNADPKIHGILIQLPLPGIPDANRLIQRIDPRKDVDGFHPQNVGHLALREFGLRPCTPRGIVTLLGHTDQPVRGRNATIVGVSNHVGRPMGLELLIAGCTVTSCHKFTPPDVLEASVRNADILVVAVGRPGLIPGEWVKPGAVVIDVGINRLDDGRLVGDVGFDAAAQRAAWITPVPGGVGPMTVATLMQNTIEAADAAGIQDSGFGIR.

Residues 175-177 (GVS) and I243 contribute to the NADP(+) site.

The protein belongs to the tetrahydrofolate dehydrogenase/cyclohydrolase family. Homodimer.

It carries out the reaction (6R)-5,10-methylene-5,6,7,8-tetrahydrofolate + NADP(+) = (6R)-5,10-methenyltetrahydrofolate + NADPH. It catalyses the reaction (6R)-5,10-methenyltetrahydrofolate + H2O = (6R)-10-formyltetrahydrofolate + H(+). It functions in the pathway one-carbon metabolism; tetrahydrofolate interconversion. Functionally, catalyzes the oxidation of 5,10-methylenetetrahydrofolate to 5,10-methenyltetrahydrofolate and then the hydrolysis of 5,10-methenyltetrahydrofolate to 10-formyltetrahydrofolate. The chain is Bifunctional protein FolD from Xanthomonas axonopodis pv. citri (strain 306).